The chain runs to 394 residues: Phosphopentomutase (394 aa).

Residues aspartate 15, aspartate 288, histidine 293, aspartate 329, histidine 330, and histidine 341 each coordinate Mn(2+).

This sequence belongs to the phosphopentomutase family. Requires Mn(2+) as cofactor.

The protein localises to the cytoplasm. The catalysed reaction is 2-deoxy-alpha-D-ribose 1-phosphate = 2-deoxy-D-ribose 5-phosphate. It carries out the reaction alpha-D-ribose 1-phosphate = D-ribose 5-phosphate. It functions in the pathway carbohydrate degradation; 2-deoxy-D-ribose 1-phosphate degradation; D-glyceraldehyde 3-phosphate and acetaldehyde from 2-deoxy-alpha-D-ribose 1-phosphate: step 1/2. Its function is as follows. Isomerase that catalyzes the conversion of deoxy-ribose 1-phosphate (dRib-1-P) and ribose 1-phosphate (Rib-1-P) to deoxy-ribose 5-phosphate (dRib-5-P) and ribose 5-phosphate (Rib-5-P), respectively. In Bacillus subtilis (strain 168), this protein is Phosphopentomutase (drm).